The following is a 483-amino-acid chain: ATP synthase subunit beta (483 aa).

169–176 is an ATP binding site; sequence GGAGVGKT.

This sequence belongs to the ATPase alpha/beta chains family. F-type ATPases have 2 components, CF(1) - the catalytic core - and CF(0) - the membrane proton channel. CF(1) has five subunits: alpha(3), beta(3), gamma(1), delta(1), epsilon(1). CF(0) has three main subunits: a(1), b(2) and c(9-12). The alpha and beta chains form an alternating ring which encloses part of the gamma chain. CF(1) is attached to CF(0) by a central stalk formed by the gamma and epsilon chains, while a peripheral stalk is formed by the delta and b chains.

Its subcellular location is the cell membrane. It catalyses the reaction ATP + H2O + 4 H(+)(in) = ADP + phosphate + 5 H(+)(out). In terms of biological role, produces ATP from ADP in the presence of a proton gradient across the membrane. The catalytic sites are hosted primarily by the beta subunits. The chain is ATP synthase subunit beta from Rhodococcus erythropolis (strain PR4 / NBRC 100887).